The sequence spans 351 residues: Penicillolysin (351 aa).

The signal sequence occupies residues 1 to 19 (MRFTTLSTAFLALAQNVYA). Positions 20-174 (FPIESDLSAL…TKALKPLDRR (155 aa)) are excised as a propeptide. Residues N52 and N181 are each glycosylated (N-linked (GlcNAc...) asparagine). Residue H302 participates in Zn(2+) binding. Residue E303 is part of the active site. Positions 306 and 317 each coordinate Zn(2+).

It belongs to the peptidase M35 family. Zn(2+) is required as a cofactor.

The catalysed reaction is Preferential cleavage of bonds with hydrophobic residues in P1'. Also 3-Asn-|-Gln-4 and 8-Gly-|-Ser-9 bonds in insulin B chain.. This Penicillium citrinum protein is Penicillolysin (plnC).